Consider the following 275-residue polypeptide: MATYVIGDLQGCLTPLVQLLEQINYHPEQDKLWFAGDLINRGEESLETLRFIKSLGNNATVVLGNHDLHLLAVSHGYGKLKRGDTLAEILTAGDRDDLMDWLRHQPLFHYDEQLNTVMTHAGIPPCWDLQKAQTLAKEVEDKLKSDSVDEFFATMYGNKPNTWSDDLTGLDRLRAITNYLTRMRFCDENSKLDLESKEGINTATKGYAPWFNYPTKVPEDCHIVFGHWAALEGKTQKERIHALDTGCVWGGSLTALRLEDQQRFSTPCSINRKNP.

Belongs to the Ap4A hydrolase family.

It carries out the reaction P(1),P(4)-bis(5'-adenosyl) tetraphosphate + H2O = 2 ADP + 2 H(+). Its function is as follows. Hydrolyzes diadenosine 5',5'''-P1,P4-tetraphosphate to yield ADP. The protein is Bis(5'-nucleosyl)-tetraphosphatase, symmetrical of Marinomonas sp. (strain MWYL1).